Reading from the N-terminus, the 739-residue chain is ABC transporter G family member 20 (739 aa).

Residues 88 to 351 (LSFKDLTYSV…FSEFGHPIPE (264 aa)) enclose the ABC transporter domain. 144-151 (GASGSGKS) is an ATP binding site. Residues 433-643 (TEMLVIGKRS…PYEGVLQNEF (211 aa)) enclose the ABC transmembrane type-2 domain. Helical transmembrane passes span 452–472 (LFGI…TIFW), 487–507 (FFAF…PVFL), 528–548 (VLAH…AFAA), 563–583 (FLFF…FVTF), 593–613 (IGFT…GFFI), and 712–732 (LWIT…TLLI).

It belongs to the ABC transporter superfamily. ABCG family. Eye pigment precursor importer (TC 3.A.1.204) subfamily.

The protein localises to the membrane. In Arabidopsis thaliana (Mouse-ear cress), this protein is ABC transporter G family member 20 (ABCG20).